Here is a 272-residue protein sequence, read N- to C-terminus: Acyl-[acyl-carrier-protein]--UDP-N-acetylglucosamine O-acyltransferase (272 aa).

It belongs to the transferase hexapeptide repeat family. LpxA subfamily. Homotrimer.

Its subcellular location is the cytoplasm. The catalysed reaction is a (3R)-hydroxyacyl-[ACP] + UDP-N-acetyl-alpha-D-glucosamine = a UDP-3-O-[(3R)-3-hydroxyacyl]-N-acetyl-alpha-D-glucosamine + holo-[ACP]. Its pathway is glycolipid biosynthesis; lipid IV(A) biosynthesis; lipid IV(A) from (3R)-3-hydroxytetradecanoyl-[acyl-carrier-protein] and UDP-N-acetyl-alpha-D-glucosamine: step 1/6. Functionally, involved in the biosynthesis of lipid A, a phosphorylated glycolipid that anchors the lipopolysaccharide to the outer membrane of the cell. This Rhizobium leguminosarum bv. trifolii (strain WSM2304) protein is Acyl-[acyl-carrier-protein]--UDP-N-acetylglucosamine O-acyltransferase.